Reading from the N-terminus, the 204-residue chain is Holliday junction branch migration complex subunit RuvA (204 aa).

A domain I region spans residues 1–64 (MIGRLCGTAE…EDAITLFGFI (64 aa)). The interval 65-143 (DAAERDWFRL…AMPTGSAFIP (79 aa)) is domain II. The interval 144-154 (TGTAPPVAPPQ) is flexible linker. Positions 154–204 (QGKLADALSALVNLGYRRAEAEAALSAVQAEAGEDAALDELIRGGLRRLAR) are domain III.

Belongs to the RuvA family. In terms of assembly, homotetramer. Forms an RuvA(8)-RuvB(12)-Holliday junction (HJ) complex. HJ DNA is sandwiched between 2 RuvA tetramers; dsDNA enters through RuvA and exits via RuvB. An RuvB hexamer assembles on each DNA strand where it exits the tetramer. Each RuvB hexamer is contacted by two RuvA subunits (via domain III) on 2 adjacent RuvB subunits; this complex drives branch migration. In the full resolvosome a probable DNA-RuvA(4)-RuvB(12)-RuvC(2) complex forms which resolves the HJ.

It is found in the cytoplasm. The RuvA-RuvB-RuvC complex processes Holliday junction (HJ) DNA during genetic recombination and DNA repair, while the RuvA-RuvB complex plays an important role in the rescue of blocked DNA replication forks via replication fork reversal (RFR). RuvA specifically binds to HJ cruciform DNA, conferring on it an open structure. The RuvB hexamer acts as an ATP-dependent pump, pulling dsDNA into and through the RuvAB complex. HJ branch migration allows RuvC to scan DNA until it finds its consensus sequence, where it cleaves and resolves the cruciform DNA. The sequence is that of Holliday junction branch migration complex subunit RuvA from Acidiphilium cryptum (strain JF-5).